We begin with the raw amino-acid sequence, 93 residues long: MEIKILNKTDTEIQVEIKGESHTMMNALKSCLLEDKAVKVATYDIEFPGISDPVLYVRTDKSEDPIDAIKVAAKKLADECDDFLKIFGKKAKA.

Belongs to the archaeal Rpo11/eukaryotic RPB11/RPC19 RNA polymerase subunit family. Part of the RNA polymerase complex.

Its subcellular location is the cytoplasm. The enzyme catalyses RNA(n) + a ribonucleoside 5'-triphosphate = RNA(n+1) + diphosphate. Its function is as follows. DNA-dependent RNA polymerase (RNAP) catalyzes the transcription of DNA into RNA using the four ribonucleoside triphosphates as substrates. The chain is DNA-directed RNA polymerase subunit Rpo11 from Methanocella arvoryzae (strain DSM 22066 / NBRC 105507 / MRE50).